Consider the following 164-residue polypeptide: Interleukin-31 (164 aa).

Positions 1–23 (MASHSGPSTSVLFLFCCLGGWLA) are cleaved as a signal peptide. N-linked (GlcNAc...) asparagine glycans are attached at residues Asn67 and Asn100.

In terms of tissue distribution, detected at low levels in testis, bone marrow, skeletal muscle, kidney, colon, thymus, small intestine and trachea.

The protein localises to the secreted. Its function is as follows. Activates STAT3 and possibly STAT1 and STAT5 through the IL31 heterodimeric receptor composed of IL31RA and OSMR. May function in skin immunity. Enhances myeloid progenitor cell survival in vitro. Induces RETNLA and serum amyloid A protein expression in macrophages. The protein is Interleukin-31 (IL31) of Homo sapiens (Human).